We begin with the raw amino-acid sequence, 56 residues long: MAHENVWFSHPRNYGKGSRQCRVCASHSGLIRKYGLNICRQCFREKANDIGFHKYR.

C21, C24, C39, and C42 together coordinate Zn(2+).

It belongs to the universal ribosomal protein uS14 family. Zn(2+) is required as a cofactor.

The sequence is that of Small ribosomal subunit protein uS14 (RPS29) from Eremothecium gossypii (strain ATCC 10895 / CBS 109.51 / FGSC 9923 / NRRL Y-1056) (Yeast).